Reading from the N-terminus, the 94-residue chain is Pyrimidine/purine nucleoside phosphorylase (94 aa).

This sequence belongs to the nucleoside phosphorylase PpnP family.

It carries out the reaction a purine D-ribonucleoside + phosphate = a purine nucleobase + alpha-D-ribose 1-phosphate. The catalysed reaction is adenosine + phosphate = alpha-D-ribose 1-phosphate + adenine. The enzyme catalyses cytidine + phosphate = cytosine + alpha-D-ribose 1-phosphate. It catalyses the reaction guanosine + phosphate = alpha-D-ribose 1-phosphate + guanine. It carries out the reaction inosine + phosphate = alpha-D-ribose 1-phosphate + hypoxanthine. The catalysed reaction is thymidine + phosphate = 2-deoxy-alpha-D-ribose 1-phosphate + thymine. The enzyme catalyses uridine + phosphate = alpha-D-ribose 1-phosphate + uracil. It catalyses the reaction xanthosine + phosphate = alpha-D-ribose 1-phosphate + xanthine. Functionally, catalyzes the phosphorolysis of diverse nucleosides, yielding D-ribose 1-phosphate and the respective free bases. Can use uridine, adenosine, guanosine, cytidine, thymidine, inosine and xanthosine as substrates. Also catalyzes the reverse reactions. This is Pyrimidine/purine nucleoside phosphorylase from Salmonella agona (strain SL483).